A 214-amino-acid polypeptide reads, in one-letter code: Adenylate kinase (214 aa).

Residue 10–15 (GAGKGT) participates in ATP binding. An NMP region spans residues 30–59 (STGDMLRAAIKAGTELGLNAKAVMDAGQLV). Residues Thr-31, Arg-36, 57-59 (QLV), 85-88 (GFPR), and Gln-92 each bind AMP. The segment at 122-159 (GRRVHSGSGRTYHVVFNPPKVEGKDDVTGEDLVIRADD) is LID. Residues Arg-123 and 132 to 133 (TY) contribute to the ATP site. Arg-156 and Arg-167 together coordinate AMP. An ATP-binding site is contributed by Gln-200.

It belongs to the adenylate kinase family. In terms of assembly, monomer.

Its subcellular location is the cytoplasm. It carries out the reaction AMP + ATP = 2 ADP. It participates in purine metabolism; AMP biosynthesis via salvage pathway; AMP from ADP: step 1/1. In terms of biological role, catalyzes the reversible transfer of the terminal phosphate group between ATP and AMP. Plays an important role in cellular energy homeostasis and in adenine nucleotide metabolism. The sequence is that of Adenylate kinase from Aeromonas salmonicida (strain A449).